We begin with the raw amino-acid sequence, 341 residues long: Heat-inducible transcription repressor HrcA (341 aa).

The protein belongs to the HrcA family.

Functionally, negative regulator of class I heat shock genes (grpE-dnaK-dnaJ and groELS operons). Prevents heat-shock induction of these operons. The polypeptide is Heat-inducible transcription repressor HrcA (Mycobacteroides abscessus (strain ATCC 19977 / DSM 44196 / CCUG 20993 / CIP 104536 / JCM 13569 / NCTC 13031 / TMC 1543 / L948) (Mycobacterium abscessus)).